The sequence spans 29 residues: Toxin Bcg III 15.67 (29 aa).

In terms of domain architecture, EGF-like spans 2–29; that stretch reads QGTACTGEHAHSFCLNGGTCRHIQQLGE. Cysteines 6 and 21 form a disulfide.

It localises to the secreted. It is found in the nematocyst. Functionally, has both toxic and EGF activity. The polypeptide is Toxin Bcg III 15.67 (Bunodosoma cangicum (Sea anemone)).